Reading from the N-terminus, the 200-residue chain is Small ribosomal subunit protein uS4c (200 aa).

The S4 RNA-binding domain occupies isoleucine 88–cysteine 148.

It belongs to the universal ribosomal protein uS4 family. In terms of assembly, part of the 30S ribosomal subunit.

It is found in the plastid. The protein localises to the apicoplast. One of the primary rRNA binding proteins, it binds directly to 16S rRNA where it nucleates assembly of the body of the 30S subunit. The protein is Small ribosomal subunit protein uS4c (rps4) of Eimeria tenella (Coccidian parasite).